Reading from the N-terminus, the 199-residue chain is MIQISDTAKSHFLKLIQREGVPGMGVRLSAVDPGTPRADARLEFADPSELVGDEWLIDCGDFTLYVASASVAWLDGAEIDYVTQATGSQQLIIKAPKIKGQELSQVASLVERVCWVVENEINPQLASHGGRVEVQEVSAEGVVLLRFGGGCHGCGMADVTLKQGVEKTLMDRVHGVIAVRDATDHSTGAAPYISRDFSP.

Residues C151 and C154 each coordinate [4Fe-4S] cluster.

Belongs to the NfuA family. Homodimer. It depends on [4Fe-4S] cluster as a cofactor.

Its function is as follows. Involved in iron-sulfur cluster biogenesis. Binds a 4Fe-4S cluster, can transfer this cluster to apoproteins, and thereby intervenes in the maturation of Fe/S proteins. Could also act as a scaffold/chaperone for damaged Fe/S proteins. This chain is Fe/S biogenesis protein NfuA, found in Xylella fastidiosa (strain M23).